The chain runs to 246 residues: NAD-dependent protein deacylase (246 aa).

One can recognise a Deacetylase sirtuin-type domain in the interval 1–246 (MDLSQARAAL…RGLELLLEDD (246 aa)). An NAD(+)-binding site is contributed by 21–41 (GAGISAESGIPTFRDAQTGHW). Positions 66 and 69 each coordinate substrate. 101–104 (QNVD) contacts NAD(+). His123 (proton acceptor) is an active-site residue. Residues 191 to 193 (GTS), 217 to 219 (NPE), and Ala235 each bind NAD(+).

Belongs to the sirtuin family. Class III subfamily.

It is found in the cytoplasm. It catalyses the reaction N(6)-acetyl-L-lysyl-[protein] + NAD(+) + H2O = 2''-O-acetyl-ADP-D-ribose + nicotinamide + L-lysyl-[protein]. The enzyme catalyses N(6)-succinyl-L-lysyl-[protein] + NAD(+) + H2O = 2''-O-succinyl-ADP-D-ribose + nicotinamide + L-lysyl-[protein]. Its function is as follows. NAD-dependent lysine deacetylase and desuccinylase that specifically removes acetyl and succinyl groups on target proteins. Modulates the activities of several proteins which are inactive in their acylated form. In Deinococcus radiodurans (strain ATCC 13939 / DSM 20539 / JCM 16871 / CCUG 27074 / LMG 4051 / NBRC 15346 / NCIMB 9279 / VKM B-1422 / R1), this protein is NAD-dependent protein deacylase.